A 420-amino-acid chain; its full sequence is Protein-lysine N-trimethyltransferase SMYD5 (420 aa).

The 330-residue stretch at 29 to 358 (AEARFISSAK…AGEEICISYL (330 aa)) folds into the SET domain. The MYND-type zinc finger occupies 104-142 (PEQCSIRKDLHQQCPRCQVTYCSAECRQAALEQYHQVLC). Y357 provides a ligand contact to S-adenosyl-L-methionine. The interval 392-420 (DDPDVTSDEEEEAEGETDDAELEDEMTDV) is disordered.

Belongs to the class V-like SAM-binding methyltransferase superfamily.

Its subcellular location is the cytoplasm. It carries out the reaction L-lysyl-[protein] + 3 S-adenosyl-L-methionine = N(6),N(6),N(6)-trimethyl-L-lysyl-[protein] + 3 S-adenosyl-L-homocysteine + 3 H(+). It catalyses the reaction L-lysyl(20)-[histone H4] + 3 S-adenosyl-L-methionine = N(6),N(6),N(6)-trimethyl-L-lysyl(20)-[histone H4] + 3 S-adenosyl-L-homocysteine + 3 H(+). The enzyme catalyses L-lysyl(36)-[histone H3] + 3 S-adenosyl-L-methionine = N(6),N(6),N(6)-trimethyl-L-lysyl(36)-[histone H3] + 3 S-adenosyl-L-homocysteine + 3 H(+). In terms of biological role, protein-lysine N-trimethyltransferase that specifically catalyzes trimethylation of 'Lys-22' of the RPL40/eL40 subunit of the 60S ribosome, thereby promoting translation elongation and protein synthesis. May also act as a histone methyltransferase in the context of histone octamers, but not on nucleosome substrates: trimethylates 'Lys-36' of histone H3 and 'Lys-20' of histone H4 to form H3K36me3 and H4K20me3, respectively. The histone methyltransferase activity, which is independent of its SET domain, is however unsure in vivo. In Gallus gallus (Chicken), this protein is Protein-lysine N-trimethyltransferase SMYD5 (SMYD5).